We begin with the raw amino-acid sequence, 648 residues long: Biosynthetic arginine decarboxylase (648 aa).

N6-(pyridoxal phosphate)lysine is present on K109. 291–301 lines the substrate pocket; that stretch reads LDVGGGLGVDY.

This sequence belongs to the Orn/Lys/Arg decarboxylase class-II family. SpeA subfamily. Requires Mg(2+) as cofactor. Pyridoxal 5'-phosphate serves as cofactor.

It carries out the reaction L-arginine + H(+) = agmatine + CO2. In terms of biological role, catalyzes the biosynthesis of agmatine from arginine. This is Biosynthetic arginine decarboxylase from Prochlorococcus marinus (strain SARG / CCMP1375 / SS120).